A 383-amino-acid chain; its full sequence is tRNA-specific 2-thiouridylase MnmA (383 aa).

Residues 11 to 18 and M37 each bind ATP; that span reads GLSGGVDS. The interaction with target base in tRNA stretch occupies residues 97–99; the sequence is NPD. C102 serves as the catalytic Nucleophile. A disulfide bridge links C102 with C200. G127 serves as a coordination point for ATP. The interaction with tRNA stretch occupies residues 150–152; sequence KDQ. C200 serves as the catalytic Cysteine persulfide intermediate. Residues 312–313 are interaction with tRNA; sequence RY. The tract at residues 361 to 383 is disordered; the sequence is IDTAHPADRSAPPALQTQSTEVV.

The protein belongs to the MnmA/TRMU family.

The protein resides in the cytoplasm. It catalyses the reaction S-sulfanyl-L-cysteinyl-[protein] + uridine(34) in tRNA + AH2 + ATP = 2-thiouridine(34) in tRNA + L-cysteinyl-[protein] + A + AMP + diphosphate + H(+). Functionally, catalyzes the 2-thiolation of uridine at the wobble position (U34) of tRNA, leading to the formation of s(2)U34. The sequence is that of tRNA-specific 2-thiouridylase MnmA from Halorhodospira halophila (strain DSM 244 / SL1) (Ectothiorhodospira halophila (strain DSM 244 / SL1)).